Here is a 349-residue protein sequence, read N- to C-terminus: C-X-C chemokine receptor type 4 (349 aa).

Residues 1-18 (MEIYTSDNYSEEVGSGDY) form an important for chemokine binding and signaling region. The tract at residues 1–23 (MEIYTSDNYSEEVGSGDYDSNKE) is disordered. Over 1–35 (MEIYTSDNYSEEVGSGDYDSNKEPCFRDENENFNR) the chain is Extracellular. N-linked (GlcNAc...) asparagine glycosylation is present at asparagine 8. Sulfotyrosine is present on tyrosine 9. The O-linked (Xyl...) (chondroitin sulfate) serine glycan is linked to serine 15. Tyrosine 18 carries the post-translational modification Sulfotyrosine. 2 disulfides stabilise this stretch: cysteine 25-cysteine 271 and cysteine 106-cysteine 183. Residues 36 to 60 (IFLPTIYFIIFLTGIVGNGLVILVM) form a helical membrane-spanning segment. Over 61–74 (GYQKKLRSMTDKYR) the chain is Cytoplasmic. A helical transmembrane segment spans residues 75–96 (LHLSVADLLFVITLPFWAVDAM). The segment at 91–94 (WAVD) is chemokine binding. At 97–107 (ADWYFGKFLCK) the chain is on the extracellular side. The chain crosses the membrane as a helical span at residues 108–127 (AVHIIYTVNLYSSVLILAFI). The tract at residues 110–114 (HIIYT) is chemokine binding. Residues 128–151 (SLDRYLAIVHATNSQRPRKLLAEK) lie on the Cytoplasmic side of the membrane. The short motif at 130 to 132 (DRY) is the Important for signaling element. Residues 132–144 (YLAIVHATNSQRP) are involved in dimerization; when bound to chemokine. A helical membrane pass occupies residues 152-171 (AVYVGVWIPALLLTIPDIIF). The Extracellular segment spans residues 172 to 192 (ADVSQGDGRYICDRLYPDSLW). The tract at residues 183–187 (CDRLY) is chemokine binding, important for signaling. An involved in dimerization region spans residues 188–207 (PDSLWMVVFQFQHIMVGLIL). The chain crosses the membrane as a helical span at residues 193–213 (MVVFQFQHIMVGLILPGIVIL). Topologically, residues 214–238 (SCYCIIISKLSHSKGHQKRKALKTT) are cytoplasmic. A helical membrane pass occupies residues 239–258 (VILILAFFACWLPYYVGISI). The Extracellular segment spans residues 259 to 279 (DSFILLEVIKQGCEFESVVHK). The segment at 263–265 (LLE) is involved in dimerization. The chain crosses the membrane as a helical span at residues 280–299 (WISITEALAFFHCCLNPILY). Topologically, residues 300-349 (AFLGAKFKSSAQHALNSMSRGSSLKILSKGKRGGHSSVSTESESSSFHSS) are cytoplasmic. Residues serine 316 and serine 318 each carry the phosphoserine modification. 2 positions are modified to phosphoserine; by PKC and GRK6: serine 321 and serine 322. Positions 325–349 (ILSKGKRGGHSSVSTESESSSFHSS) are disordered. Phosphoserine; by GRK6 is present on serine 327. Lysine 328 participates in a covalent cross-link: Glycyl lysine isopeptide (Lys-Gly) (interchain with G-Cter in ubiquitin). Positions 334 to 349 (HSSVSTESESSSFHSS) are enriched in low complexity. At serine 336 the chain carries Phosphoserine; by GRK6. Residues serine 345 and serine 348 each carry the phosphoserine modification.

This sequence belongs to the G-protein coupled receptor 1 family. Monomer. Can form homodimers. Interacts with CD164. Interacts with ARRB2; the interaction is dependent on the C-terminal phosphorylation of CXCR4 and allows activation of MAPK1 and MAPK3. Interacts with ARR3; the interaction is dependent on the C-terminal phosphorylation of CXCR4 and modulates calcium mobilization. Interacts with RNF113A; the interaction, enhanced by CXCL12, promotes CXCR4 ubiquitination and subsequent degradation. Interacts (via the cytoplasmic C-terminal) with ITCH (via the WW domains I and II); the interaction, enhanced by CXCL12, promotes CXCR4 ubiquitination and leads to its degradation. Interacts with extracellular ubiquitin. Interacts with DBN1; this interaction is enhanced by antigenic stimulation. Following LPS binding, may form a complex with GDF5, HSP90AA1 and HSPA8. Post-translationally, phosphorylated on agonist stimulation. Rapidly phosphorylated on serine and threonine residues in the C-terminal. Phosphorylation at Ser-321 and Ser-322 leads to recruitment of ITCH, ubiquitination and protein degradation. In terms of processing, ubiquitinated after ligand binding, leading to its degradation. Ubiquitinated by ITCH at the cell membrane on agonist stimulation. The ubiquitin-dependent mechanism, endosomal sorting complex required for transport (ESCRT), then targets CXCR4 for lysosomal degradation. This process is dependent also on prior Ser-/Thr-phosphorylation in the C-terminal of CXCR4. Also binding of ARRB1 to STAM negatively regulates CXCR4 sorting to lysosomes though modulating ubiquitination of SFR5S. Sulfation is required for efficient binding of CXCL12/SDF-1alpha and promotes its dimerization. Post-translationally, O- and N-glycosylated. N-glycosylation can mask coreceptor function. The O-glycosylation chondroitin sulfate attachment does not affect interaction with CXCL12/SDF-1alpha nor its coreceptor activity.

The protein localises to the cell membrane. Its subcellular location is the cell junction. It localises to the early endosome. The protein resides in the late endosome. It is found in the lysosome. In terms of biological role, receptor for the C-X-C chemokine CXCL12/SDF-1 that transduces a signal by increasing intracellular calcium ion levels and enhancing MAPK1/MAPK3 activation. Involved in the AKT signaling cascade. Plays a role in regulation of cell migration, e.g. during wound healing. Acts as a receptor for extracellular ubiquitin; leading to enhanced intracellular calcium ions and reduced cellular cAMP levels. Binds bacterial lipopolysaccharide (LPS) et mediates LPS-induced inflammatory response, including TNF secretion by monocytes. Involved in hematopoiesis and in cardiac ventricular septum formation. Also plays an essential role in vascularization of the gastrointestinal tract, probably by regulating vascular branching and/or remodeling processes in endothelial cells. Involved in cerebellar development. In the CNS, could mediate hippocampal-neuron survival. In Rattus norvegicus (Rat), this protein is C-X-C chemokine receptor type 4 (Cxcr4).